We begin with the raw amino-acid sequence, 209 residues long: dITP/XTP pyrophosphatase (209 aa).

7 to 12 (SSHGYK) is a substrate binding site. The active-site Proton acceptor is the D70. D70 is a Mg(2+) binding site. Substrate contacts are provided by residues S71, 154–157 (FGYD), K177, and 182–183 (HR).

This sequence belongs to the HAM1 NTPase family. Homodimer. Requires Mg(2+) as cofactor.

It carries out the reaction XTP + H2O = XMP + diphosphate + H(+). The enzyme catalyses dITP + H2O = dIMP + diphosphate + H(+). The catalysed reaction is ITP + H2O = IMP + diphosphate + H(+). Pyrophosphatase that catalyzes the hydrolysis of nucleoside triphosphates to their monophosphate derivatives, with a high preference for the non-canonical purine nucleotides XTP (xanthosine triphosphate), dITP (deoxyinosine triphosphate) and ITP. Seems to function as a house-cleaning enzyme that removes non-canonical purine nucleotides from the nucleotide pool, thus preventing their incorporation into DNA/RNA and avoiding chromosomal lesions. The sequence is that of dITP/XTP pyrophosphatase from Chlamydia trachomatis serovar A (strain ATCC VR-571B / DSM 19440 / HAR-13).